The sequence spans 402 residues: 1-deoxy-D-xylulose 5-phosphate reductoisomerase (402 aa).

6 residues coordinate NADPH: threonine 10, glycine 11, serine 12, isoleucine 13, asparagine 38, and asparagine 124. Residue lysine 125 coordinates 1-deoxy-D-xylulose 5-phosphate. An NADPH-binding site is contributed by glutamate 126. Aspartate 150 is a Mn(2+) binding site. Serine 151, glutamate 152, serine 186, and histidine 209 together coordinate 1-deoxy-D-xylulose 5-phosphate. Glutamate 152 serves as a coordination point for Mn(2+). Position 215 (glycine 215) interacts with NADPH. Residues serine 222, asparagine 227, lysine 228, and glutamate 231 each contribute to the 1-deoxy-D-xylulose 5-phosphate site. Glutamate 231 is a Mn(2+) binding site.

This sequence belongs to the DXR family. It depends on Mg(2+) as a cofactor. The cofactor is Mn(2+).

The enzyme catalyses 2-C-methyl-D-erythritol 4-phosphate + NADP(+) = 1-deoxy-D-xylulose 5-phosphate + NADPH + H(+). Its pathway is isoprenoid biosynthesis; isopentenyl diphosphate biosynthesis via DXP pathway; isopentenyl diphosphate from 1-deoxy-D-xylulose 5-phosphate: step 1/6. Catalyzes the NADPH-dependent rearrangement and reduction of 1-deoxy-D-xylulose-5-phosphate (DXP) to 2-C-methyl-D-erythritol 4-phosphate (MEP). This chain is 1-deoxy-D-xylulose 5-phosphate reductoisomerase, found in Vibrio vulnificus (strain YJ016).